The primary structure comprises 609 residues: Myoneurin (609 aa).

The BTB domain occupies 24 to 89; that stretch reads CDCTILIGDF…IYSGNLNYDS (66 aa). 2 consecutive short sequence motifs (nuclear localization signal) follow at residues 172–188 and 257–262; these read KKSQ…RSHQ and QKPAKL. 8 C2H2-type zinc fingers span residues 301 to 323, 329 to 351, 357 to 380, 386 to 408, 414 to 436, 442 to 464, 470 to 492, and 498 to 521; these read PVCN…MRIH, YVCH…VRTH, YQCK…RMHH, YKCD…ARKH, YVCD…VRRH, YVCD…ARKH, YICG…FRSH, and FVCE…LKMH. The disordered stretch occupies residues 528 to 553; it reads IEMKSAENSSSSEDSTTKSPEPESLE. The segment covering 533–546 has biased composition (low complexity); it reads AENSSSSEDSTTKS.

The protein localises to the nucleus. In Xenopus laevis (African clawed frog), this protein is Myoneurin (mynn).